Here is a 1148-residue protein sequence, read N- to C-terminus: MSRATSVGDQLDVPARTIYLNQPHLNKFCDNQISTAKYSVVTFLPRFLYEQIRRAANAFFLFIALLQQIPDVSPTGRYTTLVPLIIILTIAGIKEIVEDFKRHKADNAVNKKKTIVLRNGMWQTIVWKEVAVGDIVKVVNGQYLPADVVLLSSSEPQAMCYVETANLDGETNLKIRQGLSHTADMQTREVLMKLSGTIECEGPNRHLYDFTGNLNLDGKSPVALGPDQILLRGTQLRNTQWGFGIVVYTGHDTKLMQNSTKAPLKRSNVEKVTNVQILVLFGILLVMALVSSVGALYWNGSQGGKNWYIKKMDATSDNFGYNLLTFIILYNNLIPISLLVTLEVVKYTQALFINWDTDMYYLGNDTPAMARTSNLNEELGQVKYLFSDKTGTLTCNIMNFKKCSIAGVTYGHFPELTREPSSDDFSRIPPPPSDSCDFDDPRLLKNIEDHHPTAPCIQEFLTLLAVCHTVVPERDGDSIVYQASSPDEAALVKGARKLGFVFTARTPYSVIIEAMGQEQTFGILNVLEFSSDRKRMSVIVRTPSGQLRLYCKGADNVIFERLSKDSKYMEETLCHLEYFATEGLRTLCVAYADLSERDYEEWLKVYQEASTILKDRAQRLEECYEIIEKNLLLLGATAIEDRLQAGVPETIATLLKAEIKIWVLTGDKQETAINIGYSCRLVSQNMALILLKEDSLDATRAAITQHCADLGSLLGKENDAALIIDGHTLKYALSFEVRRSFLDLALSCKAVICCRVSPLQKSEIVDVVKKRVKAITLAIGDGANDVGMIQTAHVGVGISGNEGMQATNNSDYAIAQFSYLEKLLLVHGAWSYNRVTKCILYCFYKNVVLYIIELWFAFVNGFSGQILFERWCIGLYNVIFTALPPFTLGIFERSCSQESMLRFPQLYKITQNAEGFNTKVFWGHCINALVHSLILFWFPMKALEHDTVLANGHATDYLFVGNIVYTYVVVTVCLKAGLETTAWTKFSHLAVWGSMLIWLVFFGIYSTIWPTIPIAPDMKGQATMVLSSAHFWLGLFLVPTACLIEDVAWRAAKHTCKKTLLEEVQELEMKSRVMGRAMLRDSNGKRMNERDRLLKRLSRKTPPTLFRGSSLQQSMPHGYAFSQEEHGAVTQEEIVRAYDTTKQKSRKK.

Topologically, residues methionine 1–arginine 54 are cytoplasmic. Phosphothreonine is present on threonine 5. The chain crosses the membrane as a helical span at residues alanine 55 to threonine 75. Residues glycine 76–threonine 79 lie on the Exoplasmic loop side of the membrane. The chain crosses the membrane as a helical span at residues threonine 80–phenylalanine 100. At lysine 101–glutamine 276 the chain is on the cytoplasmic side. A helical transmembrane segment spans residues isoleucine 277 to tyrosine 297. At tryptophan 298–leucine 324 the chain is on the exoplasmic loop side. The chain crosses the membrane as a helical span at residues threonine 325–valine 345. Residues lysine 346 to valine 847 lie on the Cytoplasmic side of the membrane. The active-site 4-aspartylphosphate intermediate is the aspartate 388. 12 residues coordinate ATP: aspartate 388, lysine 389, threonine 390, glutamate 488, phenylalanine 529, lysine 552, arginine 585, threonine 665, glycine 666, aspartate 667, arginine 755, and lysine 761. A Mg(2+)-binding site is contributed by aspartate 388. Residue threonine 390 coordinates Mg(2+). Aspartate 781 serves as a coordination point for Mg(2+). Positions 784 and 785 each coordinate ATP. Aspartate 785 serves as a coordination point for Mg(2+). A helical membrane pass occupies residues valine 848–phenylalanine 868. Residues glutamate 869–arginine 870 are Exoplasmic loop-facing. The chain crosses the membrane as a helical span at residues tryptophan 871–phenylalanine 891. Topologically, residues glutamate 892 to lysine 919 are cytoplasmic. The helical transmembrane segment at valine 920–methionine 940 threads the bilayer. Residues lysine 941–tyrosine 957 are Exoplasmic loop-facing. The chain crosses the membrane as a helical span at residues leucine 958–leucine 978. The Cytoplasmic segment spans residues glutamate 979–histidine 988. Residues leucine 989–tryptophan 1009 traverse the membrane as a helical segment. Topologically, residues proline 1010–threonine 1023 are exoplasmic loop. The chain crosses the membrane as a helical span at residues methionine 1024 to isoleucine 1044. Over glutamate 1045 to lysine 1148 the chain is Cytoplasmic. Residues proline 1102–histidine 1126 are disordered.

It belongs to the cation transport ATPase (P-type) (TC 3.A.3) family. Type IV subfamily. As to quaternary structure, component of a P4-ATPase flippase complex which consists of a catalytic alpha subunit and an accessory beta subunit. Interacts with TMEM30A to form a flippase complex. Mg(2+) serves as cofactor. Expressed in retinal photoreceptor cells and testis.

It localises to the membrane. Its subcellular location is the golgi apparatus membrane. It is found in the endosome membrane. The protein localises to the cell membrane. The protein resides in the photoreceptor outer segment membrane. It localises to the photoreceptor inner segment membrane. It carries out the reaction ATP + H2O + phospholipidSide 1 = ADP + phosphate + phospholipidSide 2.. The catalysed reaction is a 1,2-diacyl-sn-glycero-3-phospho-L-serine(out) + ATP + H2O = a 1,2-diacyl-sn-glycero-3-phospho-L-serine(in) + ADP + phosphate + H(+). The enzyme catalyses a 1,2-diacyl-sn-glycero-3-phosphoethanolamine(in) + ATP + H2O = a 1,2-diacyl-sn-glycero-3-phosphoethanolamine(out) + ADP + phosphate + H(+). With respect to regulation, ATPase activity is stimulated by phosphatidylserine (PS) and minimally by phosphatidylethanolamine (PE). ATPase activity is inhibited by N-ethylmaleimide (NEM) and vanadate. Flippase activity is inhibited by NEM and 1,2-dioleoyl-sn-glycero-3-phospho-L-serine (DOPS). Its function is as follows. Catalytic component of a P4-ATPase flippase complex which catalyzes the hydrolysis of ATP coupled to the transport of aminophospholipids from the outer to the inner leaflet of various membranes and ensures the maintenance of asymmetric distribution of phospholipids. Able to translocate phosphatidylserine, but not phosphatidylcholine. Phospholipid translocation seems also to be implicated in vesicle formation and in uptake of lipid signaling molecules. Reconstituted to liposomes, the ATP8A2:TMEM30A flippase complex predominantly transports phosphatidylserine (PS) and to a lesser extent phosphatidylethanolamine (PE). Phospholipid translocation is not associated with a countertransport of an inorganic ion or other charged substrate from the cytoplasmic side toward the exoplasm in connection with the phosphorylation from ATP. ATP8A2:TMEM30A may be involved in regulation of neurite outgrowth. Proposed to function in the generation and maintenance of phospholipid asymmetry in photoreceptor disk membranes and neuronal axon membranes. May be involved in vesicle trafficking in neuronal cells. Required for normal visual and auditory function; involved in photoreceptor and inner ear spiral ganglion cell survival. This is Phospholipid-transporting ATPase IB from Bos taurus (Bovine).